The following is a 318-amino-acid chain: Sucrose operon repressor (318 aa).

An HTH lacI-type domain is found at 1-56 (MIKLEDVANKAGVSVTTVSRVINRKGYLSDATISKVEKAMQDLHYIPNAAARSLQG). A DNA-binding region (H-T-H motif) is located at residues 4–23 (LEDVANKAGVSVTTVSRVIN).

Functionally, this protein may control the expression of the genes that are involved in the transport and catabolism of sucrose. The protein is Sucrose operon repressor (sacR) of Lactococcus lactis subsp. lactis (Streptococcus lactis).